We begin with the raw amino-acid sequence, 476 residues long: MSIEKNNNIGYITQVIGPVIDAVFSSGVLPKIYNALEVEGKDGPIICEVQQLLGDNRVRAISMSATDGLQRGVKVYDTKAPISVPVGKTTLGRIFNVLGQPIDNLGDTPSNETLPIHRSAPAFTDLETRPAIFETGIKVVDLLAPYRRGGKIGLFGGAGVGKTVLIMELINNIAKAHGGVSVFGGVGERTREGNDLYMEMKESGVINEKNLLESKVALVYGQMNEPPGARMRVGLTALTMAEYFRDINKQDVLLFIDNIFRFVQAGSEVSALLGRMPSAVGYQPTLGTEMGALQERITSTNQGSITSIQAVYVPADDLTDPAPATTFAHLDATTVLSRGLAAKGIYPAVDPLDSTSTMLQPLIVGDEHYKTAQLVKETLQRYKELQDIIAILGIDELSEEDRLVVDRARKIERFLSQPFFVAEVFTGSPGKYVDLESTIKGFNMILGGELDDLPEQAFYLVGDINEAISKAKTFNN.

156 to 163 serves as a coordination point for ATP; the sequence is GGAGVGKT.

Belongs to the ATPase alpha/beta chains family. As to quaternary structure, F-type ATPases have 2 components, CF(1) - the catalytic core - and CF(0) - the membrane proton channel. CF(1) has five subunits: alpha(3), beta(3), gamma(1), delta(1), epsilon(1). CF(0) has four main subunits: a(1), b(1), b'(1) and c(9-12).

Its subcellular location is the plastid. It localises to the chloroplast thylakoid membrane. The enzyme catalyses ATP + H2O + 4 H(+)(in) = ADP + phosphate + 5 H(+)(out). In terms of biological role, produces ATP from ADP in the presence of a proton gradient across the membrane. The catalytic sites are hosted primarily by the beta subunits. This Fucus vesiculosus (Bladder wrack) protein is ATP synthase subunit beta, chloroplastic.